Consider the following 54-residue polypeptide: Ribulose bisphosphate carboxylase large chain (54 aa).

A propeptide spanning residues 1 to 2 is cleaved from the precursor; sequence MS. An N-acetylproline modification is found at proline 3. Lysine 14 bears the N6,N6,N6-trimethyllysine mark.

The protein belongs to the RuBisCO large chain family. Type I subfamily. As to quaternary structure, heterohexadecamer of 8 large chains and 8 small chains.

It is found in the plastid. Its subcellular location is the chloroplast. It catalyses the reaction 2 (2R)-3-phosphoglycerate + 2 H(+) = D-ribulose 1,5-bisphosphate + CO2 + H2O. The enzyme catalyses D-ribulose 1,5-bisphosphate + O2 = 2-phosphoglycolate + (2R)-3-phosphoglycerate + 2 H(+). Its function is as follows. RuBisCO catalyzes two reactions: the carboxylation of D-ribulose 1,5-bisphosphate, the primary event in carbon dioxide fixation, as well as the oxidative fragmentation of the pentose substrate in the photorespiration process. Both reactions occur simultaneously and in competition at the same active site. This Geum borisii (Avens) protein is Ribulose bisphosphate carboxylase large chain (rbcL).